The following is a 663-amino-acid chain: DNA ligase (663 aa).

Residues 34–38, 83–84, and E114 contribute to the NAD(+) site; these read DYEYD and SL. The active-site N6-AMP-lysine intermediate is the K116. The NAD(+) site is built by R137, E171, K286, and K310. Residues C404, C407, C422, and C427 each contribute to the Zn(2+) site. The BRCT domain occupies 585–663; it reads TVESPLTGKN…ADEFIKLANG (79 aa).

The protein belongs to the NAD-dependent DNA ligase family. LigA subfamily. Requires Mg(2+) as cofactor. The cofactor is Mn(2+).

It catalyses the reaction NAD(+) + (deoxyribonucleotide)n-3'-hydroxyl + 5'-phospho-(deoxyribonucleotide)m = (deoxyribonucleotide)n+m + AMP + beta-nicotinamide D-nucleotide.. In terms of biological role, DNA ligase that catalyzes the formation of phosphodiester linkages between 5'-phosphoryl and 3'-hydroxyl groups in double-stranded DNA using NAD as a coenzyme and as the energy source for the reaction. It is essential for DNA replication and repair of damaged DNA. This is DNA ligase from Brachyspira hyodysenteriae (strain ATCC 49526 / WA1).